The chain runs to 279 residues: S-methyl-5'-thioadenosine phosphorylase (279 aa).

Phosphate contacts are provided by residues Ser-13, 55 to 56, and 88 to 89; these read RH and TA. Position 191 (Met-191) interacts with substrate. Thr-192 provides a ligand contact to phosphate. Residue 215–217 coordinates substrate; that stretch reads DYD.

Belongs to the PNP/MTAP phosphorylase family. MTAP subfamily. Homotrimer.

It is found in the cytoplasm. The protein localises to the nucleus. The catalysed reaction is S-methyl-5'-thioadenosine + phosphate = 5-(methylsulfanyl)-alpha-D-ribose 1-phosphate + adenine. The protein operates within amino-acid biosynthesis; L-methionine biosynthesis via salvage pathway; S-methyl-5-thio-alpha-D-ribose 1-phosphate from S-methyl-5'-thioadenosine (phosphorylase route): step 1/1. Its function is as follows. Catalyzes the reversible phosphorylation of S-methyl-5'-thioadenosine (MTA) to adenine and 5-methylthioribose-1-phosphate. Involved in the breakdown of MTA, a major by-product of polyamine biosynthesis. Responsible for the first step in the methionine salvage pathway after MTA has been generated from S-adenosylmethionine. Has broad substrate specificity with 6-aminopurine nucleosides as preferred substrates. The chain is S-methyl-5'-thioadenosine phosphorylase from Aedes aegypti (Yellowfever mosquito).